A 296-amino-acid chain; its full sequence is NADPH-dependent 1-acyldihydroxyacetone phosphate reductase (296 aa).

Position 9 (I9) interacts with NADP(+). Residues 11 to 15 (GCSEG) carry the GXSXG motif. NADP(+)-binding residues include T35, R41, D56, N84, K117, Y148, K152, V181, and T183. The Proton donor role is filled by Y148. Residue K152 is the Lowers pKa of active site Tyr of the active site.

It belongs to the short-chain dehydrogenases/reductases (SDR) family.

Its subcellular location is the lipid droplet. It is found in the cytoplasm. It localises to the vacuole. The protein localises to the endoplasmic reticulum. The protein resides in the golgi apparatus. Its subcellular location is the mitochondrion outer membrane. It catalyses the reaction 1-hexadecanoyl-sn-glycero-3-phosphate + NADP(+) = 1-hexadecanoylglycerone 3-phosphate + NADPH + H(+). It carries out the reaction a 1-acylglycerone 3-phosphate + NADPH + H(+) = a 1-acyl-sn-glycero-3-phosphate + NADP(+). The enzyme catalyses a triacylglycerol + H2O = a diacylglycerol + a fatty acid + H(+). In terms of biological role, can convert acyl and alkyl dihydroxyacetone-phosphate (DHAP) into glycerolipids and ether lipids, respectively. Required for the biosynthesis of phosphatidic acid via the DHAP pathway, where it reduces 1-acyl DHAP to lysophosphatidic acid (LPA). Also has triacylglycerol (TAG) lipase activity. Involved in the mobilization of the non-polar storage lipids triacylglycerols (TAGs) from lipid particles by hydrolysis of TAGs. Lipolysis of TAG by AYR1 is essential for starvation-induced autophagy. Forms an NADPH-regulated cation-selective channel in the mitochondrial outer membrane. This Schizosaccharomyces pombe (strain 972 / ATCC 24843) (Fission yeast) protein is NADPH-dependent 1-acyldihydroxyacetone phosphate reductase (ayr1).